The primary structure comprises 504 residues: Amidophosphoribosyltransferase (504 aa).

Cysteine 2 acts as the Nucleophile in catalysis. Positions 2 to 235 (CGIVGIVSQS…PGEAIYVTFE (234 aa)) constitute a Glutamine amidotransferase type-2 domain. Mg(2+) contacts are provided by threonine 305, aspartate 367, and aspartate 368.

It in the C-terminal section; belongs to the purine/pyrimidine phosphoribosyltransferase family. It depends on Mg(2+) as a cofactor.

It carries out the reaction 5-phospho-beta-D-ribosylamine + L-glutamate + diphosphate = 5-phospho-alpha-D-ribose 1-diphosphate + L-glutamine + H2O. The protein operates within purine metabolism; IMP biosynthesis via de novo pathway; N(1)-(5-phospho-D-ribosyl)glycinamide from 5-phospho-alpha-D-ribose 1-diphosphate: step 1/2. In terms of biological role, catalyzes the formation of phosphoribosylamine from phosphoribosylpyrophosphate (PRPP) and glutamine. This Pasteurella multocida (strain Pm70) protein is Amidophosphoribosyltransferase.